The sequence spans 188 residues: Der GTPase-activating protein YihI (188 aa).

Disordered regions lie at residues 1–80 (MKQP…VPVP) and 162–188 (DEDD…KDTF). Over residues 27–37 (TRDELDAEARD) the composition is skewed to basic and acidic residues. The span at 47–57 (NRSGARTNVEG) shows a compositional bias: polar residues.

Belongs to the YihI family. Interacts with Der.

Its function is as follows. A GTPase-activating protein (GAP) that modifies Der/EngA GTPase function. May play a role in ribosome biogenesis. The protein is Der GTPase-activating protein YihI of Yersinia pseudotuberculosis serotype O:3 (strain YPIII).